The chain runs to 295 residues: 4-hydroxy-tetrahydrodipicolinate synthase (295 aa).

Residue threonine 47 participates in pyruvate binding. The Proton donor/acceptor role is filled by tyrosine 135. The Schiff-base intermediate with substrate role is filled by lysine 163. Residue isoleucine 206 participates in pyruvate binding.

The protein belongs to the DapA family. Homodimer.

The protein resides in the cytoplasm. The catalysed reaction is L-aspartate 4-semialdehyde + pyruvate = (2S,4S)-4-hydroxy-2,3,4,5-tetrahydrodipicolinate + H2O + H(+). It functions in the pathway amino-acid biosynthesis; L-lysine biosynthesis via DAP pathway; (S)-tetrahydrodipicolinate from L-aspartate: step 3/4. Its function is as follows. Catalyzes the condensation of (S)-aspartate-beta-semialdehyde [(S)-ASA] and pyruvate to 4-hydroxy-tetrahydrodipicolinate (HTPA). The sequence is that of 4-hydroxy-tetrahydrodipicolinate synthase from Staphylococcus saprophyticus subsp. saprophyticus (strain ATCC 15305 / DSM 20229 / NCIMB 8711 / NCTC 7292 / S-41).